Reading from the N-terminus, the 294-residue chain is Glycine--tRNA ligase alpha subunit (294 aa).

The protein belongs to the class-II aminoacyl-tRNA synthetase family. Tetramer of two alpha and two beta subunits.

Its subcellular location is the cytoplasm. It carries out the reaction tRNA(Gly) + glycine + ATP = glycyl-tRNA(Gly) + AMP + diphosphate. This chain is Glycine--tRNA ligase alpha subunit, found in Trichodesmium erythraeum (strain IMS101).